The chain runs to 213 residues: rRNA N(6)-adenosine-methyltransferase Mettl5 (213 aa).

S-adenosyl-L-methionine is bound by residues Gln-28, Thr-31, Gly-59, Cys-62, and 108–109 (DV).

It belongs to the methyltransferase superfamily. PrmA family. As to quaternary structure, heterodimer; heterodimerizes with Trmt112. Enriched in the brain.

It localises to the cytoplasm. It carries out the reaction adenosine in rRNA + S-adenosyl-L-methionine = N(6)-methyladenosine in rRNA + S-adenosyl-L-homocysteine + H(+). Catalytic subunit of a heterodimer with Trmt112, which specifically methylates the 6th position of adenine in 18S rRNA. The chain is rRNA N(6)-adenosine-methyltransferase Mettl5 from Drosophila melanogaster (Fruit fly).